A 283-amino-acid chain; its full sequence is Acetylglutamate kinase (283 aa).

Substrate contacts are provided by residues 63–64, Arg-85, and Asn-178; that span reads GG.

Belongs to the acetylglutamate kinase family. ArgB subfamily.

The protein resides in the cytoplasm. It carries out the reaction N-acetyl-L-glutamate + ATP = N-acetyl-L-glutamyl 5-phosphate + ADP. It functions in the pathway amino-acid biosynthesis; L-arginine biosynthesis; N(2)-acetyl-L-ornithine from L-glutamate: step 2/4. In terms of biological role, catalyzes the ATP-dependent phosphorylation of N-acetyl-L-glutamate. The sequence is that of Acetylglutamate kinase from Prochlorococcus marinus (strain MIT 9215).